Reading from the N-terminus, the 54-residue chain is Large ribosomal subunit protein bL33B (54 aa).

This sequence belongs to the bacterial ribosomal protein bL33 family.

The sequence is that of Large ribosomal subunit protein bL33B from Mycolicibacterium smegmatis (strain ATCC 700084 / mc(2)155) (Mycobacterium smegmatis).